A 525-amino-acid polypeptide reads, in one-letter code: GMP synthase [glutamine-hydrolyzing] (525 aa).

One can recognise a Glutamine amidotransferase type-1 domain in the interval Arg9–Leu207. Cys86 acts as the Nucleophile in catalysis. Active-site residues include His181 and Glu183. The region spanning Trp208–Arg400 is the GMPS ATP-PPase domain. Position 235 to 241 (Ser235 to Ser241) interacts with ATP.

Homodimer.

It carries out the reaction XMP + L-glutamine + ATP + H2O = GMP + L-glutamate + AMP + diphosphate + 2 H(+). Its pathway is purine metabolism; GMP biosynthesis; GMP from XMP (L-Gln route): step 1/1. Its function is as follows. Catalyzes the synthesis of GMP from XMP. The protein is GMP synthase [glutamine-hydrolyzing] of Tolumonas auensis (strain DSM 9187 / NBRC 110442 / TA 4).